The following is a 224-amino-acid chain: UPF0111 protein CT_691 (224 aa).

This sequence belongs to the UPF0111 family.

This Chlamydia trachomatis serovar D (strain ATCC VR-885 / DSM 19411 / UW-3/Cx) protein is UPF0111 protein CT_691.